Here is a 926-residue protein sequence, read N- to C-terminus: DNA mismatch repair protein MutS (926 aa).

Residues 1–60 (MAASQNPIQGSLFGGNEESDLNKAEKLKGSERSNVNLSHQQLKEDASLRPRIKQTPKNPN) form a disordered region. Positions 20 to 31 (DLNKAEKLKGSE) are enriched in basic and acidic residues. Residue 726 to 733 (GPNASGKS) coordinates ATP.

This sequence belongs to the DNA mismatch repair MutS family.

In terms of biological role, this protein is involved in the repair of mismatches in DNA. It is possible that it carries out the mismatch recognition step. This protein has a weak ATPase activity. The chain is DNA mismatch repair protein MutS from Prochlorococcus marinus (strain NATL2A).